The primary structure comprises 1720 residues: DNA-directed RNA polymerase I subunit RPA1 (1720 aa).

Residues C64, C67, C74, H77, C104, and C107 each contribute to the Zn(2+) site. The tract at residues 110–201 (LTCPRAVIHL…IALFWKAHMN (92 aa)) is clamp. Zn(2+) contacts are provided by C205 and C208. At S240 the chain carries Phosphoserine. Positions 320–426 (FTNGQTVNLQ…IRQILEKKEG (107 aa)) are clamp. The tract at residues 403-416 (DSEMDKLMMDKYPG) is rudder. DNA is bound by residues K424, R429, and R436. Residues 468–542 (YPQPVTPWNV…QGTKIVCRHV (75 aa)) form an involved in RRN3 binding to Pol I complex region. Residue R552 participates in RNA binding. The Mg(2+) site is built by D588, D590, and D592. D592 provides a ligand contact to RNA. The interval 805–883 (KPKADVKRQR…NEINKACMPF (79 aa)) is funnel. Positions 960–1001 (KPPEFFFHCMAGREGLVDTAVKTSRSGYLQRCIIKHLEGLVV) are bridging helix. Positions 1060–1155 (ADPKKALHHF…SLSVWRPDIY (96 aa)) are mediates the interaction with TOP2A. The interval 1207-1248 (PGEAVGLLAAQSIGEPSTQMTLNTFHFAGRGEMNVTLGIPRL) is trigger loop. R1249 serves as a coordination point for DNA. The interval 1365–1498 (RNVNTRRATQ…SQEPQGPEAM (134 aa)) is disordered. Residues 1373–1390 (TQRDLDNAGELGRSRGEQ) show a composition bias toward basic and acidic residues. A Phosphoserine modification is found at S1386. Composition is skewed to acidic residues over residues 1391-1412 (EGDE…DADA) and 1422-1446 (EEEV…EDMQ). The span at 1447-1461 (EERNPHREGARKTQE) shows a compositional bias: basic and acidic residues. Residues 1462-1474 (QDEEVGLGTEEDP) are compositionally biased toward acidic residues.

The protein belongs to the RNA polymerase beta' chain family. Component of the RNA polymerase I (Pol I) complex consisting of 13 subunits: a ten-subunit catalytic core composed of POLR1A/RPA1, POLR1B/RPA2, POLR1C/RPAC1, POLR1D/RPAC2, POLR1H/RPA12, POLR2E/RPABC1, POLR2F/RPABC2, POLR2H/RPABC3, POLR2K/RPABC4 and POLR2L/RPABC5; a mobile stalk subunit POLR1F/RPA43 protruding from the core and additional subunits homologous to general transcription factors POLR1E/RPA49 and POLR1G/RPA34. Part of Pol I pre-initiation complex (PIC), in which Pol I core assembles with RRN3 and promoter-bound UTBF and SL1/TIF-IB complex. Interacts (via dock II domain) with TOP2A; this interaction may assist Pol I transcription initiation by releasing supercoils occurring during DNA unwinding. Interacts with CAVIN1; this interaction induces the dissociation of Pol I complex paused at rDNA terminator sequences. Interacts with MYO1C. Interacts with ERBB2. Interacts with DDX11. Interacts with RECQL5. It depends on Mg(2+) as a cofactor.

It localises to the nucleus. The protein resides in the nucleolus. Its subcellular location is the chromosome. The catalysed reaction is RNA(n) + a ribonucleoside 5'-triphosphate = RNA(n+1) + diphosphate. Its function is as follows. Catalytic core component of RNA polymerase I (Pol I), a DNA-dependent RNA polymerase which synthesizes ribosomal RNA precursors using the four ribonucleoside triphosphates as substrates. Transcribes 47S pre-rRNAs from multicopy rRNA gene clusters, giving rise to 5.8S, 18S and 28S ribosomal RNAs. Pol I-mediated transcription cycle proceeds through transcription initiation, transcription elongation and transcription termination stages. During transcription initiation, Pol I pre-initiation complex (PIC) is recruited by the selectivity factor 1 (SL1/TIF-IB) complex bound to the core promoter that precedes an rDNA repeat unit. The PIC assembly bends the promoter favoring the formation of the transcription bubble and promoter escape. Once the polymerase has escaped from the promoter it enters the elongation phase during which RNA is actively polymerized, based on complementarity with the template DNA strand. Highly processive, assembles in structures referred to as 'Miller trees' where many elongating Pol I complexes queue and transcribe the same rDNA coding regions. At terminator sequences downstream of the rDNA gene, PTRF interacts with Pol I and halts Pol I transcription leading to the release of the RNA transcript and polymerase from the DNA. Forms Pol I active center together with the second largest subunit POLR1B/RPA2. Appends one nucleotide at a time to the 3' end of the nascent RNA, with POLR1A/RPA1 contributing a Mg(2+)-coordinating DxDGD motif, and POLR1B/RPA2 participating in the coordination of a second Mg(2+) ion and providing lysine residues believed to facilitate Watson-Crick base pairing between the incoming nucleotide and the template base. Typically, Mg(2+) ions direct a 5' nucleoside triphosphate to form a phosphodiester bond with the 3' hydroxyl of the preceding nucleotide of the nascent RNA, with the elimination of pyrophosphate. Has proofreading activity: Pauses and backtracks to allow the cleavage of a missincorporated nucleotide via POLR1H/RPA12. High Pol I processivity is associated with decreased transcription fidelity. This chain is DNA-directed RNA polymerase I subunit RPA1, found in Homo sapiens (Human).